The sequence spans 402 residues: Glutamyl-tRNA reductase (402 aa).

Substrate contacts are provided by residues 48–51 (TCNR), serine 91, 96–98 (EDQ), and glutamine 102. Catalysis depends on cysteine 49, which acts as the Nucleophile. An NADP(+)-binding site is contributed by 171–176 (GAGKMG).

It belongs to the glutamyl-tRNA reductase family. In terms of assembly, homodimer.

It carries out the reaction (S)-4-amino-5-oxopentanoate + tRNA(Glu) + NADP(+) = L-glutamyl-tRNA(Glu) + NADPH + H(+). The protein operates within porphyrin-containing compound metabolism; protoporphyrin-IX biosynthesis; 5-aminolevulinate from L-glutamyl-tRNA(Glu): step 1/2. Catalyzes the NADPH-dependent reduction of glutamyl-tRNA(Glu) to glutamate 1-semialdehyde (GSA). This is Glutamyl-tRNA reductase from Methanothermobacter thermautotrophicus (strain ATCC 29096 / DSM 1053 / JCM 10044 / NBRC 100330 / Delta H) (Methanobacterium thermoautotrophicum).